Here is a 107-residue protein sequence, read N- to C-terminus: Envelope small membrane protein (107 aa).

The Virion surface portion of the chain corresponds to 1 to 11; sequence MMNLVNKSLEE. The chain crosses the membrane as a helical span at residues 12–32; the sequence is NGSFLTAVYIFCAFVALYLLG. Topologically, residues 33–107 are intravirion; the sequence is RALHAFVQAA…NFQNDGKLHS (75 aa).

It belongs to the gammacoronaviruses E protein family. Homooligomer. Interacts with the M membrane protein in the budding compartment of the host cell, which is located between endoplasmic reticulum and the Golgi complex. The cytoplasmic tails of both proteins are important for this function. Interacts with Nucleoprotein.

Its subcellular location is the host Golgi apparatus membrane. Plays a central role in virus morphogenesis and assembly. Acts as a viroporin and self-assembles in host membranes forming pentameric protein-lipid pores that allow ion transport. Also plays a role in the induction of apoptosis. The sequence is that of Envelope small membrane protein from Gallus gallus (Chicken).